Reading from the N-terminus, the 293-residue chain is Foldase protein PrsA 2 (293 aa).

A signal peptide spans 1–20 (MKKKLILGLVMMMALFSLAA). C21 carries the N-palmitoyl cysteine lipid modification. C21 is lipidated: S-diacylglycerol cysteine. The 92-residue stretch at 135-226 (QPDITVSHIL…YGYHIIQMDK (92 aa)) folds into the PpiC domain.

It belongs to the PrsA family.

The protein resides in the cell membrane. The enzyme catalyses [protein]-peptidylproline (omega=180) = [protein]-peptidylproline (omega=0). Plays a major role in protein secretion by helping the post-translocational extracellular folding of several secreted proteins. This is Foldase protein PrsA 2 (prsA2) from Listeria monocytogenes serovar 1/2a (strain ATCC BAA-679 / EGD-e).